A 192-amino-acid polypeptide reads, in one-letter code: Large ribosomal subunit protein bL9 (192 aa).

A disordered region spans residues 173 to 192 (ALRPEDFFDPEADGVDEDEA). Residues 179–192 (FFDPEADGVDEDEA) show a composition bias toward acidic residues.

It belongs to the bacterial ribosomal protein bL9 family.

Its function is as follows. Binds to the 23S rRNA. In Rhizobium leguminosarum bv. trifolii, this protein is Large ribosomal subunit protein bL9 (rplI).